Here is a 610-residue protein sequence, read N- to C-terminus: MIPVSRFFTVQDPSNALLSYTQKGIDFFEKLGQFSKEKAAIEEEYSTKLRSLAKKYAKKSEEDDEILKSVSYTSSFNSFLQQLDQIATRHQTSAEHIRGGVVSYVASKTCQMRSSRKNAINDLKTINDKLEDQINEMCKSGKCYLKSFKDAENSYQKFYKADKNLEISRLELEKARALANARNEACELAKQDYSALVRKTNAEQKRYHVELLPVIFARLKAVDKECIADMRQVLQKIVSFDDSLADSTEECRKIMQREVGKIDAEGDAQLVLKSVEATIEQPAPFEIEDLGDPKNCDSRTNDSADGSGGKLLKSSPSKNRIIRNFLGILKEKEADEKPEASNNDQLMYTDKSKPAHVRLSCLRSKIRDMEKQLEQAIQGREGITRLQQAYYTNPQHGNPSACTEPLISYAKKIEKLKMDIHNLKEFYAMLEMSVEEGQERSFGGRDTPDTTRSMSGSSTNQSSSKTIEDVLSGEAGNSSSADDSSKNILRQLFTTPKRLISSPKTSKSSTPTPLRRRAEISSPKILRSSFSGAIRKSLSTPDSVKVETAVTVTALFEFAKSSAETMSIEQGEILLVLEHDHGDGWTRTKNCRKHNEESGFVPTSYLQFPQ.

An F-BAR domain is found at 1–267 (MIPVSRFFTV…EVGKIDAEGD (267 aa)). The disordered stretch occupies residues 283-315 (APFEIEDLGDPKNCDSRTNDSADGSGGKLLKSS). Basic and acidic residues predominate over residues 291-302 (GDPKNCDSRTND). The REM-1 domain maps to 352–429 (SKPAHVRLSC…IHNLKEFYAM (78 aa)). Residues 355–385 (AHVRLSCLRSKIRDMEKQLEQAIQGREGITR) adopt a coiled-coil conformation. 2 disordered regions span residues 436–487 (EGQE…SSKN) and 499–519 (LISSPKTSKSSTPTPLRRRAE). Residues 437–449 (GQERSFGGRDTPD) are compositionally biased toward basic and acidic residues. The segment covering 453 to 464 (SMSGSSTNQSSS) has biased composition (low complexity). Polar residues predominate over residues 475–487 (AGNSSSADDSSKN). The segment covering 501 to 513 (SSPKTSKSSTPTP) has biased composition (low complexity). Residues 547–610 (ETAVTVTALF…VPTSYLQFPQ (64 aa)) enclose the SH3 domain.

This sequence belongs to the FNBP1 family. In terms of assembly, interacts (via SH3 domain) with wsp-1 and abi-1. Interacts with cdc-42 and (via SH3 domain) with wve-1.

It is found in the cell junction. The protein localises to the cell membrane. The protein resides in the cytoplasmic vesicle. Its subcellular location is the cytoplasm. It localises to the recycling endosome. Functionally, plays a role in protein trafficking, actin organization and embryonic morphogenesis. Potentially acts as a cdc-42 effector. May play a role in egg laying. Together with toca-1, is required for protein trafficking regulating yolk protein clathrin-mediated endocytosis by oocytes during oogenesis and retrograde recycling and the sorting of recycling endosome cargo proteins such as mig-14. Also, together with toca-2, controls the distribution of actin at cell junctions. This is Transducer of Cdc42-dependent actin assembly protein 2 homolog from Caenorhabditis elegans.